A 256-amino-acid polypeptide reads, in one-letter code: Spore coat polysaccharide biosynthesis protein SpsA (256 aa).

C155 and C243 are oxidised to a cystine. D191 is a catalytic residue.

This sequence belongs to the glycosyltransferase 2 family. Monomer in solution.

It participates in spore coat biogenesis; spore coat polysaccharide biosynthesis. Functionally, glycosyltransferase implicated in the synthesis of the spore coat. This is Spore coat polysaccharide biosynthesis protein SpsA (spsA) from Bacillus subtilis (strain 168).